We begin with the raw amino-acid sequence, 582 residues long: External alternative NADH-ubiquinone oxidoreductase, mitochondrial (582 aa).

Residues 1–30 (MLRLRPAVRAVSVARSVALTRSLHVSVAKF) constitute a mitochondrion transit peptide. The tract at residues 46 to 65 (KQTAGHQGHHQEIPKPDENH) is disordered. Over residues 54-65 (HHQEIPKPDENH) the composition is skewed to basic and acidic residues. 114–144 (TLVVLGSGWGSVSFLKKLDTSNYNVIVVSPR) is a binding site for FAD. 277–313 (LHTVVVGGGPTGVEFAAELQDFFEDDLRKWIPDIRDD) contacts NAD(+). Residues 454–501 (LLNGIAKTEDLNNEITNLEKQSEHTFDEQERKNIFAQLESKSRKLRRS) adopt a coiled-coil conformation.

Belongs to the NADH dehydrogenase family. It depends on FAD as a cofactor.

The protein localises to the mitochondrion inner membrane. The enzyme catalyses a quinone + NADH + H(+) = a quinol + NAD(+). The catalysed reaction is a ubiquinone + NADH + H(+) = a ubiquinol + NAD(+). Alternative NADH-ubiquinone oxidoreductase which catalyzes the oxidation of mitochondrial NADH does not translocate protons across the inner mitochondrial membrane. The sequence is that of External alternative NADH-ubiquinone oxidoreductase, mitochondrial (NDH2) from Yarrowia lipolytica (strain CLIB 122 / E 150) (Yeast).